Consider the following 115-residue polypeptide: Large ribosomal subunit protein bL19 (115 aa).

It belongs to the bacterial ribosomal protein bL19 family.

Functionally, this protein is located at the 30S-50S ribosomal subunit interface and may play a role in the structure and function of the aminoacyl-tRNA binding site. This is Large ribosomal subunit protein bL19 from Desulforapulum autotrophicum (strain ATCC 43914 / DSM 3382 / VKM B-1955 / HRM2) (Desulfobacterium autotrophicum).